The primary structure comprises 290 residues: uncharacterized protein (290 aa).

Transmembrane regions (helical) follow at residues 10–27 (FFVA…LLLI), 32–54 (VNYI…YFFS), 69–91 (ILVP…GVLI), 100–117 (VLAG…FFYF), and 121–143 (YLLM…NFEY). A coiled-coil region spans residues 147–183 (VGKERKRILKLKKNYHKLLKEFSNFEREKRMFSNLRK).

The protein localises to the cell membrane. This is an uncharacterized protein from Aquifex aeolicus (strain VF5).